A 266-amino-acid polypeptide reads, in one-letter code: Ribonuclease 3 (266 aa).

In terms of domain architecture, RNase III spans 8 to 130 (LARLTKKLGY…IIGAVYLDSN (123 aa)). Position 43 (glutamate 43) interacts with Mg(2+). The active site involves aspartate 47. 2 residues coordinate Mg(2+): aspartate 116 and glutamate 119. Glutamate 119 is a catalytic residue. The region spanning 157–227 (DPKTRLQEFL…AQQILALIEK (71 aa)) is the DRBM domain. The tract at residues 229-266 (REQEKEVKIKPTKQAKLANPRHTKSNPSSSSKKSSTRK) is disordered. The span at 253 to 266 (SNPSSSSKKSSTRK) shows a compositional bias: low complexity.

The protein belongs to the ribonuclease III family. As to quaternary structure, homodimer. Requires Mg(2+) as cofactor.

The protein resides in the cytoplasm. It carries out the reaction Endonucleolytic cleavage to 5'-phosphomonoester.. In terms of biological role, digests double-stranded RNA. Involved in the processing of primary rRNA transcript to yield the immediate precursors to the large and small rRNAs (23S and 16S). Processes some mRNAs, and tRNAs when they are encoded in the rRNA operon. Processes pre-crRNA and tracrRNA of type II CRISPR loci if present in the organism. The protein is Ribonuclease 3 of Colwellia psychrerythraea (strain 34H / ATCC BAA-681) (Vibrio psychroerythus).